The following is a 444-amino-acid chain: uncharacterized protein (444 aa).

The HTH gntR-type domain occupies 1–69; sequence MEKYMSLLTR…PKSGYYIVKK (69 aa). Residues 29-48 constitute a DNA-binding region (H-T-H motif); the sequence is IRQLSARYQVSKSTVIRALQ. Lys286 is modified (N6-(pyridoxal phosphate)lysine).

This sequence in the C-terminal section; belongs to the class-I pyridoxal-phosphate-dependent aminotransferase family. Pyridoxal 5'-phosphate is required as a cofactor.

This is an uncharacterized protein from Bacillus subtilis (strain 168).